The primary structure comprises 384 residues: G protein-coupled receptor 88 (384 aa).

Over 1 to 35 (MTNSSSTSTSTTTGGSLLLLCEEEESWAGRRIPVS) the chain is Extracellular. The N-linked (GlcNAc...) asparagine glycan is linked to N3. A helical transmembrane segment spans residues 36–56 (LLYSGLAIGGTLANGMVIYLV). The Cytoplasmic portion of the chain corresponds to 57 to 73 (SSFRKLQTTSNAFIVNG). Residues 74–94 (CAADLSVCALWMPQEAVLGLL) traverse the membrane as a helical segment. Topologically, residues 95-116 (PAGSAEPPGDWDSGGGSYRLLR) are extracellular. A helical membrane pass occupies residues 117 to 136 (GGLLGLGLTVSLLSHCLVAL). The Cytoplasmic portion of the chain corresponds to 137–158 (NRYLLITRAPATYQVLYQRRHT). The chain crosses the membrane as a helical span at residues 159-179 (AGMLALSWALALGLVLLLPPW). At 180-195 (APKPGAEPPQVHYPAL) the chain is on the extracellular side. A helical transmembrane segment spans residues 196–216 (LAAGALLAQTALLLHCYLGIV). The Cytoplasmic portion of the chain corresponds to 217–285 (RRVRVSVKRV…RAQRRLSGLS (69 aa)). A helical transmembrane segment spans residues 286-306 (VLLLCCVFLLATQPLVWVSLA). Residues 307 to 310 (SGFS) are Extracellular-facing. A helical membrane pass occupies residues 311–331 (LPVPWGVQAASWLLCCALSAL). Over 332 to 384 (NPLLYTWRNEEFRRSVRSVLPGVGDAAAAAAAATAVPAMSQAQLGTRAAGQHW) the chain is Cytoplasmic.

It belongs to the G-protein coupled receptor 1 family. In terms of tissue distribution, expressed predominantly in the striatum. Expressed also in olfactory tubercle, nucleus accumbens, amygdala, and neocortex. Spinal cord, pons, and medulla expression remains discrete. Also expressed in peripheral tissues, including adrenal cortex (16 dpc to 21 dpc) and cochlear ganglia (19 dpc to P3) and also at moderate levels in retina (18 dpc to 19 dpc) and spleen (21 dpc to P7).

Its subcellular location is the cell membrane. The protein localises to the cell projection. The protein resides in the cilium membrane. It is found in the cytoplasm. It localises to the nucleus. Orphan G protein-coupled receptor implicated in a large repertoire of behavioral responses that engage motor activities, spatial learning, and emotional processing. May play a role in the regulation of cognitive and motor function. Couples with the heterotrimeric G protein complex of the G(i) subfamily, consisting of GNAI1, GNB1 and GNG2, thereby acting through a G(i)-mediated pathway. Plays a role in the attenuation of D1 dopamine receptor (D1R)-mediated cAMP response in ciliated cells. In non-ciliated cells, involved in the inhibition of the beta-2 adrenergic receptor (B2AR) response. This Rattus norvegicus (Rat) protein is G protein-coupled receptor 88 (Gpr88).